A 260-amino-acid chain; its full sequence is Cytochrome c oxidase subunit 2 (260 aa).

At 1-39 (MKFEWLFLTIAPCDAAEPWQLGFQDAATPMMQGIIDLHH) the chain is on the mitochondrial intermembrane side. A helical membrane pass occupies residues 40-61 (DIFFFLILILVFVSRILVRALW). The Mitochondrial matrix portion of the chain corresponds to 62–76 (HFHYKKNPIPQRIVH). Residues 77 to 104 (GTTIEILRTIFPSIIPMFIAIPSFALLY) traverse the membrane as a helical segment. Topologically, residues 105–260 (SMDEVVVDPA…QLIPQTTGEA (156 aa)) are mitochondrial intermembrane. Positions 186, 221, 223, 225, and 229 each coordinate Cu cation. Glu-223 provides a ligand contact to Mg(2+).

The protein belongs to the cytochrome c oxidase subunit 2 family. Component of the cytochrome c oxidase (complex IV, CIV), a multisubunit enzyme composed of a catalytic core of 3 subunits and several supernumerary subunits. The complex exists as a monomer or a dimer and forms supercomplexes (SCs) in the inner mitochondrial membrane with ubiquinol-cytochrome c oxidoreductase (cytochrome b-c1 complex, complex III, CIII). Requires Cu cation as cofactor.

Its subcellular location is the mitochondrion inner membrane. The catalysed reaction is 4 Fe(II)-[cytochrome c] + O2 + 8 H(+)(in) = 4 Fe(III)-[cytochrome c] + 2 H2O + 4 H(+)(out). Component of the cytochrome c oxidase, the last enzyme in the mitochondrial electron transport chain which drives oxidative phosphorylation. The respiratory chain contains 3 multisubunit complexes succinate dehydrogenase (complex II, CII), ubiquinol-cytochrome c oxidoreductase (cytochrome b-c1 complex, complex III, CIII) and cytochrome c oxidase (complex IV, CIV), that cooperate to transfer electrons derived from NADH and succinate to molecular oxygen, creating an electrochemical gradient over the inner membrane that drives transmembrane transport and the ATP synthase. Cytochrome c oxidase is the component of the respiratory chain that catalyzes the reduction of oxygen to water. Electrons originating from reduced cytochrome c in the intermembrane space (IMS) are transferred via the dinuclear copper A center (CU(A)) of subunit 2 and heme A of subunit 1 to the active site in subunit 1, a binuclear center (BNC) formed by heme A3 and copper B (CU(B)). The BNC reduces molecular oxygen to 2 water molecules using 4 electrons from cytochrome c in the IMS and 4 protons from the mitochondrial matrix. This Glycine max (Soybean) protein is Cytochrome c oxidase subunit 2 (COX2).